Consider the following 151-residue polypeptide: Apolipoprotein A-I (151 aa).

A signal peptide spans 1–18 (MKAVVLTLAVLFLTGSQA). A propeptide spanning residues 19-24 (RHFWQQ) is cleaved from the precursor. 2 consecutive repeat copies span residues 67-88 (LKLLDNWDTLGSTITKLREQIG) and 89-110 (PVTQEFWDNLEKETEVLRQEMS). A 4 X approximate tandem repeats region spans residues 67-143 (LKLLDNWDTL…EVELYRQKVA (77 aa)). Methionine sulfoxide is present on M109. One copy of the 3; half-length repeat lies at 111 to 121 (KDLEEVKQKVQ). Residues 122–143 (PYLDDFQKKWQEEVELYRQKVA) form repeat 4.

The protein belongs to the apolipoprotein A1/A4/E family. Homodimer. Interacts with APOA1BP and CLU. Component of a sperm activating protein complex (SPAP), consisting of APOA1, an immunoglobulin heavy chain, an immunoglobulin light chain and albumin. Interacts with NDRG1. Interacts with SCGB3A2. Interacts with NAXE and YJEFN3. Glycosylated. Post-translationally, palmitoylated. In terms of processing, phosphorylation sites are present in the extracellular medium. Major protein of plasma HDL, also found in chylomicrons.

It is found in the secreted. Participates in the reverse transport of cholesterol from tissues to the liver for excretion by promoting cholesterol efflux from tissues and by acting as a cofactor for the lecithin cholesterol acyltransferase (LCAT). As part of the SPAP complex, activates spermatozoa motility. This Panthera tigris altaica (Siberian tiger) protein is Apolipoprotein A-I (APOA1).